The chain runs to 238 residues: dITP/XTP pyrophosphatase (238 aa).

7–12 is a binding site for substrate; that stretch reads SANQHK. Asp89 acts as the Proton acceptor in catalysis. Asp89 contacts Mg(2+). Substrate-binding positions include Ser90, 191–194, Lys217, and 222–223; these read FGYD and HR.

The protein belongs to the HAM1 NTPase family. In terms of assembly, homodimer. It depends on Mg(2+) as a cofactor.

It catalyses the reaction XTP + H2O = XMP + diphosphate + H(+). The catalysed reaction is dITP + H2O = dIMP + diphosphate + H(+). The enzyme catalyses ITP + H2O = IMP + diphosphate + H(+). Functionally, pyrophosphatase that catalyzes the hydrolysis of nucleoside triphosphates to their monophosphate derivatives, with a high preference for the non-canonical purine nucleotides XTP (xanthosine triphosphate), dITP (deoxyinosine triphosphate) and ITP. Seems to function as a house-cleaning enzyme that removes non-canonical purine nucleotides from the nucleotide pool, thus preventing their incorporation into DNA/RNA and avoiding chromosomal lesions. This Helicobacter hepaticus (strain ATCC 51449 / 3B1) protein is dITP/XTP pyrophosphatase.